The chain runs to 375 residues: 23S rRNA (uracil(747)-C(5))-methyltransferase RlmC (375 aa).

[4Fe-4S] cluster contacts are provided by Cys-3, Cys-11, Cys-14, and Cys-87. Residues Gln-212, Phe-241, Glu-262, and Asn-307 each contribute to the S-adenosyl-L-methionine site. Cys-334 (nucleophile) is an active-site residue.

The protein belongs to the class I-like SAM-binding methyltransferase superfamily. RNA M5U methyltransferase family. RlmC subfamily.

The enzyme catalyses uridine(747) in 23S rRNA + S-adenosyl-L-methionine = 5-methyluridine(747) in 23S rRNA + S-adenosyl-L-homocysteine + H(+). Its function is as follows. Catalyzes the formation of 5-methyl-uridine at position 747 (m5U747) in 23S rRNA. This chain is 23S rRNA (uracil(747)-C(5))-methyltransferase RlmC, found in Escherichia coli O139:H28 (strain E24377A / ETEC).